A 115-amino-acid polypeptide reads, in one-letter code: Guanylin (115 aa).

The first 21 residues, 1–21 (MNAFLLSALCLLGAWAALAGG), serve as a signal peptide directing secretion. Cystine bridges form between C69–C82, C104–C112, and C107–C115.

It belongs to the guanylin family. In terms of tissue distribution, highly expressed in ileum and colon. Found in plasma.

Its subcellular location is the secreted. Its function is as follows. Endogenous activator of intestinal guanylate cyclase. It stimulates this enzyme through the same receptor binding region as the heat-stable enterotoxins. The polypeptide is Guanylin (GUCA2A) (Homo sapiens (Human)).